The primary structure comprises 149 residues: Large ribosomal subunit protein uL30 (149 aa).

Belongs to the universal ribosomal protein uL30 family. As to quaternary structure, part of the 50S ribosomal subunit.

The protein is Large ribosomal subunit protein uL30 of Methanopyrus kandleri (strain AV19 / DSM 6324 / JCM 9639 / NBRC 100938).